A 156-amino-acid chain; its full sequence is Ribosomal RNA large subunit methyltransferase H (156 aa).

S-adenosyl-L-methionine contacts are provided by residues Leu73, Gly104, and 123–128 (LSALTL).

This sequence belongs to the RNA methyltransferase RlmH family. As to quaternary structure, homodimer.

Its subcellular location is the cytoplasm. The enzyme catalyses pseudouridine(1915) in 23S rRNA + S-adenosyl-L-methionine = N(3)-methylpseudouridine(1915) in 23S rRNA + S-adenosyl-L-homocysteine + H(+). Its function is as follows. Specifically methylates the pseudouridine at position 1915 (m3Psi1915) in 23S rRNA. The chain is Ribosomal RNA large subunit methyltransferase H from Erwinia tasmaniensis (strain DSM 17950 / CFBP 7177 / CIP 109463 / NCPPB 4357 / Et1/99).